Reading from the N-terminus, the 347-residue chain is Anthranilate phosphoribosyltransferase (347 aa).

Residues G88, 91–92 (GD), T96, 98–101 (NIST), 116–124 (KHGNRSVSS), and S128 each bind 5-phospho-alpha-D-ribose 1-diphosphate. G88 is an anthranilate binding site. S100 is a binding site for Mg(2+). N119 is an anthranilate binding site. R174 provides a ligand contact to anthranilate. Mg(2+) is bound by residues D232 and E233.

This sequence belongs to the anthranilate phosphoribosyltransferase family. In terms of assembly, homodimer. Mg(2+) is required as a cofactor.

The enzyme catalyses N-(5-phospho-beta-D-ribosyl)anthranilate + diphosphate = 5-phospho-alpha-D-ribose 1-diphosphate + anthranilate. Its pathway is amino-acid biosynthesis; L-tryptophan biosynthesis; L-tryptophan from chorismate: step 2/5. Its function is as follows. Catalyzes the transfer of the phosphoribosyl group of 5-phosphorylribose-1-pyrophosphate (PRPP) to anthranilate to yield N-(5'-phosphoribosyl)-anthranilate (PRA). The sequence is that of Anthranilate phosphoribosyltransferase from Shewanella sp. (strain MR-7).